The sequence spans 451 residues: Protein FAM117A (451 aa).

The span at 1–25 (MSGAAAGGRGGGSWGPGRGGAGGLR) shows a compositional bias: gly residues. 2 disordered regions span residues 1–83 (MSGA…RPQP) and 164–183 (RTKLSRSGKEKERSCPVQGD). Residues S29 and S67 each carry the phosphoserine modification. A coiled-coil region spans residues 149-175 (TDHRKEITKLKQQLQRTKLSRSGKEKE). 2 positions are modified to phosphoserine: S193 and S213. A disordered region spans residues 242–293 (DGHRAPAPPQNSSCDHSLLLEPGNLTSSPSVPLASPQPPSQASREEHQGATE). A phosphoserine mark is found at S318 and S326. Residue T353 is modified to Phosphothreonine. Residues 403-451 (SPGSPLPTASPRAPRKGPEASKASSLPSEPWQRSPPSEESVLFQSSLVV) are disordered. Phosphoserine occurs at positions 412 and 426. Residues 436-451 (SPPSEESVLFQSSLVV) show a composition bias toward polar residues.

It belongs to the FAM117 family.

The polypeptide is Protein FAM117A (Fam117a) (Mus musculus (Mouse)).